A 513-amino-acid chain; its full sequence is Glucose-6-phosphate 1-dehydrogenase 2 (513 aa).

N-acetylalanine is present on Ala2. Ser8 bears the Phosphoserine mark. Thr10 is subject to Phosphothreonine. NADP(+) is bound by residues 38 to 45 and Arg72; that span reads GASGDLAK. An N6-acetyllysine modification is found at Lys89. 2 residues coordinate NADP(+): Tyr147 and Lys171. Residues Lys171, 201–205, Glu239, and Asp258 contribute to the D-glucose 6-phosphate site; that span reads HYLDK. N6-(2-hydroxyisobutyryl)lysine; alternate is present on Lys171. At Lys171 the chain carries N6-acetyllysine; alternate. His263 (proton acceptor) is an active-site residue. An NADP(+)-binding site is contributed by Arg357. Residues Lys360 and Arg365 each coordinate D-glucose 6-phosphate. NADP(+) is bound by residues Lys366, Arg370, and Arg393. Gln395 lines the D-glucose 6-phosphate pocket. 421–423 provides a ligand contact to NADP(+); it reads DLT. At Lys432 the chain carries N6-acetyllysine. Positions 487 and 503 each coordinate NADP(+). Tyr503 is subject to Phosphotyrosine.

This sequence belongs to the glucose-6-phosphate dehydrogenase family. Homotetramer; dimer of dimers. Interacts with SIRT2; the interaction is enhanced by H(2)O(2) treatment. Acetylated by ELP3; acetylation inhibits its homodimerization and enzyme activity. Deacetylated by SIRT2; deacetylation stimulates its enzyme activity. As to expression, testis.

Its subcellular location is the cytoplasm. The protein resides in the cytosol. The protein localises to the membrane. The enzyme catalyses D-glucose 6-phosphate + NADP(+) = 6-phospho-D-glucono-1,5-lactone + NADPH + H(+). It participates in carbohydrate degradation; pentose phosphate pathway; D-ribulose 5-phosphate from D-glucose 6-phosphate (oxidative stage): step 1/3. In terms of biological role, catalyzes the rate-limiting step of the oxidative pentose-phosphate pathway, which represents a route for the dissimilation of carbohydrates besides glycolysis. The main function of this enzyme is to provide reducing power (NADPH) and pentose phosphates for fatty acid and nucleic acid synthesis. This is Glucose-6-phosphate 1-dehydrogenase 2 (G6pd2) from Mus musculus (Mouse).